Reading from the N-terminus, the 254-residue chain is Cyclin homolog (254 aa).

Belongs to the cyclin family. Cyclin D subfamily.

Functionally, may be highly relevant to the process of cellular transformation and rapid T-cell proliferation effected by HVS during latent infections of T-cells in susceptible hosts. This is Cyclin homolog (72) from Saimiriine herpesvirus 2 (strain 11) (SaHV-2).